A 1333-amino-acid chain; its full sequence is Partitioning defective 3 homolog (1333 aa).

At Ser-25 the chain carries Phosphoserine. A Phosphothreonine modification is found at Thr-91. Residues 143-262 (SSDPALTGLS…VGHADTGLEN (120 aa)) are disordered. Polar residues-rich tracts occupy residues 150–163 (GLSTSVSDNNFSSE) and 171–187 (TRWSTTAGFLKQNTAGS). Ser-156 and Ser-174 each carry phosphoserine. The span at 190–203 (TCDRKKDENYRSLP) shows a compositional bias: basic and acidic residues. Polar residues predominate over residues 207–224 (SSWSNQFQRDNARSSLSA). The region spanning 271–359 (MVKLVQVPND…ARVIWFHVVP (89 aa)) is the PDZ 1 domain. Disordered regions lie at residues 369-388 (LSQREKNNYSPGRFSPDSHC) and 397-441 (NAPQ…APPS). Ser-383 is modified (phosphoserine). 2 PDZ domains span residues 461–546 (NIQL…LVFR) and 590–677 (EVPL…GMIQ). Position 489 is a phosphotyrosine (Tyr-489). Phosphoserine occurs at positions 692, 695, 715, 728, 806, and 824. Interaction with PRKCI and PRKCZ stretches follow at residues 712 to 932 (RRIS…YDKP) and 712 to 936 (RRIS…MVDD). Position 831 is an N6-acetyllysine (Lys-831). At Ser-834 the chain carries Phosphoserine. At Lys-848 the chain carries N6-acetyllysine. A phosphoserine mark is found at Ser-849 and Ser-869. Disordered regions lie at residues 861-884 (TVDDQRAGSPSRDVGPSLGLKKSS), 928-1011 (SYDK…AKKG), 1024-1071 (KHRK…ERQA), 1110-1267 (PQSP…LGGH), and 1283-1333 (QEQR…PFYS). An N6-acetyllysine modification is found at Lys-881. The interval 931-1333 (KPMVDDDDEG…TPEKGRPFYS (403 aa)) is interaction with FRMD4A. A compositionally biased stretch (acidic residues) spans 935 to 949 (DDDDEGMETLEEDTE). Residue Ser-958 is modified to Phosphoserine; by AURKA. A phosphoserine mark is found at Ser-967 and Ser-969. Composition is skewed to basic and acidic residues over residues 977–1005 (DPEKRDKTERKKDKAGKDKKKDREKEKDK) and 1026–1039 (RKDDKMEKMGRIKI). Ser-1042 carries the post-translational modification Phosphoserine. Positions 1046–1071 (EEDRVRMKEEQERIQAKTREFRERQA) are enriched in basic and acidic residues. A coiled-coil region spans residues 1046–1078 (EEDRVRMKEEQERIQAKTREFRERQARERDYAE). The span at 1134–1143 (PGDSNRSTPS) shows a compositional bias: polar residues. Residues 1144–1171 (NHDRIQRLRQEFQQAKQDEDVEDRRRTY) show a composition bias toward basic and acidic residues. 3 coiled-coil regions span residues 1145–1168 (HDRIQRLRQEFQQAKQDEDVEDRR), 1195–1218 (VQVQRQRQEERESFQQAQRQYSSL), and 1274–1295 (MLETQELLRQEQRRKEQQLKKQ). Residues 1176–1199 (SWSSSRPASQSGRHSVSVEVQVQR) are compositionally biased toward low complexity. The span at 1215-1236 (YSSLPRQSRKNASSISQDSWEQ) shows a compositional bias: polar residues. Positions 1283–1292 (QEQRRKEQQL) are enriched in basic and acidic residues. Positions 1314–1323 (SQVARLNRLQ) are enriched in polar residues. A compositionally biased stretch (basic and acidic residues) spans 1324–1333 (TPEKGRPFYS). An N6-acetyllysine modification is found at Lys-1327.

Belongs to the PAR3 family. Interacts with PRCKI and CDH5. Interacts (via PDZ 3 domain) with PTEN (via C-terminus). Component of a complex whose core is composed of ARHGAP17, AMOT, PALS1, PATJ and PARD3/PAR3. Interacts with LIMK2, AURKA and AURKB. Component of the Par polarity complex, composed of at least phosphorylated PRKCZ, PARD3 and TIAM1. Interacts with ECT2 and FBF1. Interacts (via PDZ 1 domain) with F11R/JAM1, PARD6A and PARD6B. Part of a complex with PARD6A or PARD6B, PRKCI or PRKCZ and CDC42 or RAC1. Directly interacts with TIAM1 and TIAM2. Interacts with SIRT2. Interacts (via coiled-coil domain) with FRMD4A. Found in a complex with PARD3, CYTH1 and FRMD4A. Interacts with SAPCD2. Interacts with PRKCA. As to quaternary structure, interacts with PRKCZ. Acetylated. Deacetylated by SIRT2, thereby inhibiting Schwann cell peripheral myelination. In terms of processing, phosphorylation at Ser-824 by PRKCZ and PRKCI occurs at the most apical tip of epithelial cell-cell contacts during the initial phase of tight junction formation and may promote dissociation of the complex with PARD6. EGF-induced Tyr-1123 phosphorylation mediates dissociation from LIMK2. Phosphorylation by AURKA at Ser-958 is required for the normal establishment of neuronal polarity. Isoform 4 and isoform 5 are phosphorylated during oocyte maturation. In terms of tissue distribution, all isoforms are expressed in heart, while expression in brain is mainly limited to isoform 1, and to isoform 3 to a weaker level.

It is found in the cytoplasm. The protein localises to the endomembrane system. Its subcellular location is the cell junction. It localises to the tight junction. The protein resides in the adherens junction. It is found in the cell cortex. The protein localises to the cytoskeleton. Its subcellular location is the cell membrane. In terms of biological role, adapter protein involved in asymmetrical cell division and cell polarization processes. Seems to play a central role in the formation of epithelial tight junctions. Targets the phosphatase PTEN to cell junctions. Association with PARD6B may prevent the interaction of PARD3 with F11R/JAM1, thereby preventing tight junction assembly. The PARD6-PARD3 complex links GTP-bound Rho small GTPases to atypical protein kinase C proteins. Required for establishment of neuronal polarity and normal axon formation in cultured hippocampal neurons. Involved in Schwann cell peripheral myelination. The sequence is that of Partitioning defective 3 homolog (Pard3) from Mus musculus (Mouse).